A 262-amino-acid polypeptide reads, in one-letter code: LysM and putative peptidoglycan-binding domain-containing protein 3 (262 aa).

Topologically, residues 1–218 are extracellular; that stretch reads MSGRIPNHGY…PYHGADWSLG (218 aa). One can recognise a LysM domain in the interval 70–114; the sequence is ISRDICEGDTLNSIALQYCCTVADLKRANNFLNEQDFFALRTIKI. Residues 219 to 239 form a helical membrane-spanning segment; the sequence is WWTAVAIMVFVGIITPLFYFL. Over 240 to 262 the chain is Cytoplasmic; the sequence is YYEVLMKVNTSHTLNSIEKSGPS.

The protein resides in the cell membrane. It localises to the golgi apparatus. Its function is as follows. Essential for Golgi structural integrity. The polypeptide is LysM and putative peptidoglycan-binding domain-containing protein 3 (lysmd3) (Xenopus tropicalis (Western clawed frog)).